Here is a 120-residue protein sequence, read N- to C-terminus: Aspartate 1-decarboxylase (120 aa).

Serine 25 (schiff-base intermediate with substrate; via pyruvic acid) is an active-site residue. Residue serine 25 is modified to Pyruvic acid (Ser). Threonine 57 lines the substrate pocket. Tyrosine 58 serves as the catalytic Proton donor. Glycine 73 to alanine 75 is a substrate binding site.

This sequence belongs to the PanD family. Heterooctamer of four alpha and four beta subunits. Pyruvate serves as cofactor. In terms of processing, is synthesized initially as an inactive proenzyme, which is activated by self-cleavage at a specific serine bond to produce a beta-subunit with a hydroxyl group at its C-terminus and an alpha-subunit with a pyruvoyl group at its N-terminus.

The protein localises to the cytoplasm. The enzyme catalyses L-aspartate + H(+) = beta-alanine + CO2. Its pathway is cofactor biosynthesis; (R)-pantothenate biosynthesis; beta-alanine from L-aspartate: step 1/1. Its function is as follows. Catalyzes the pyruvoyl-dependent decarboxylation of aspartate to produce beta-alanine. This chain is Aspartate 1-decarboxylase, found in Cupriavidus taiwanensis (strain DSM 17343 / BCRC 17206 / CCUG 44338 / CIP 107171 / LMG 19424 / R1) (Ralstonia taiwanensis (strain LMG 19424)).